A 151-amino-acid chain; its full sequence is 3-hydroxyacyl-[acyl-carrier-protein] dehydratase FabZ (151 aa).

H56 is an active-site residue.

It belongs to the thioester dehydratase family. FabZ subfamily.

Its subcellular location is the cytoplasm. The enzyme catalyses a (3R)-hydroxyacyl-[ACP] = a (2E)-enoyl-[ACP] + H2O. In terms of biological role, involved in unsaturated fatty acids biosynthesis. Catalyzes the dehydration of short chain beta-hydroxyacyl-ACPs and long chain saturated and unsaturated beta-hydroxyacyl-ACPs. This Rhodopseudomonas palustris (strain HaA2) protein is 3-hydroxyacyl-[acyl-carrier-protein] dehydratase FabZ.